We begin with the raw amino-acid sequence, 550 residues long: Methionine--tRNA ligase (550 aa).

The 'HIGH' region signature appears at 14 to 24 (PYANGSLHIGH). Cys145, Cys148, Cys158, and Cys161 together coordinate Zn(2+). Positions 331–335 (KMSKS) match the 'KMSKS' region motif. Lys334 contacts ATP.

Belongs to the class-I aminoacyl-tRNA synthetase family. MetG type 1 subfamily. As to quaternary structure, monomer. Requires Zn(2+) as cofactor.

It is found in the cytoplasm. The catalysed reaction is tRNA(Met) + L-methionine + ATP = L-methionyl-tRNA(Met) + AMP + diphosphate. Its function is as follows. Is required not only for elongation of protein synthesis but also for the initiation of all mRNA translation through initiator tRNA(fMet) aminoacylation. This Wigglesworthia glossinidia brevipalpis protein is Methionine--tRNA ligase.